A 72-amino-acid polypeptide reads, in one-letter code: Translation initiation factor IF-1 (72 aa).

The 72-residue stretch at 1 to 72 (MSKDDSIEFE…TKGRITYRMK (72 aa)) folds into the S1-like domain.

The protein belongs to the IF-1 family. In terms of assembly, component of the 30S ribosomal translation pre-initiation complex which assembles on the 30S ribosome in the order IF-2 and IF-3, IF-1 and N-formylmethionyl-tRNA(fMet); mRNA recruitment can occur at any time during PIC assembly.

Its subcellular location is the cytoplasm. In terms of biological role, one of the essential components for the initiation of protein synthesis. Stabilizes the binding of IF-2 and IF-3 on the 30S subunit to which N-formylmethionyl-tRNA(fMet) subsequently binds. Helps modulate mRNA selection, yielding the 30S pre-initiation complex (PIC). Upon addition of the 50S ribosomal subunit IF-1, IF-2 and IF-3 are released leaving the mature 70S translation initiation complex. The chain is Translation initiation factor IF-1 from Xanthomonas euvesicatoria pv. vesicatoria (strain 85-10) (Xanthomonas campestris pv. vesicatoria).